A 782-amino-acid chain; its full sequence is MSKVRVYEYAKEHQVSSKKVIEALKDLGIEVANHMSTINENALRQLDNAIDGTNKKAEAPKKETTSNENGNSKGPNKPNMTNSNEKSNKPNKPAGQANKPATANKSHGAKPATNKPANTSNQTQSSGNKQPAGGQKRNNNNNSNRPGGGNPNRPGGNNRPNRGGNFNNKGRNTKKKGKLNHSTVPPTPPKPKELPEKIVFSESLTVAELAKKLYREPSELIKKLFMLGVVATINQSLDKDAIELICDDYGVQVEEEIKVDVTDLDVYFENELNEAVDESKLVERPPVVTIMGHVDHGKTTLLDSLRNTKVTLGEAGGITQHIGAYQLEIHDKKITFLDTPGHAAFTAMRARGAQITDITILVVAADDGVMPQTIEAINHAKAAGMPIIVAVNKIDKPQANPDRVMQELTEYELVPEAWGGDTIFAPISAKFGEGLENLLDMILLVSEVEELKANPDRRAIGSVIEAELDKGRGPVATLLVQDGTLNIGDPIVVGNTFGRVRAMVNDLGRRVKKVGPSTPVEITGLNDVPQAGDRFVVFEDEKTARNIGETRASRALVAQRSATNRVSLDNLFEHMKAGEMKEVNVIIKADVQGSVEALAASLRKIDVEGVNVKIIHTAVGAINESDITLAAASNAIIIGFNVRPTTQAREAAENESVDIRLHRVIYKAIDEIEAAMKGMLDPEFQEKIIGQAQVRQTINVSKVGTIAGCYVTDGKITRDSGVRIIRDGIVVFEGEIATLKRFKDDAKEVAKGYECGITVQNFNDIKEDDVIEAYVMEEIERK.

Residues 47–196 (DNAIDGTNKK…TPPKPKELPE (150 aa)) form a disordered region. Residues 53–65 (TNKKAEAPKKETT) are compositionally biased toward basic and acidic residues. The span at 66–81 (SNENGNSKGPNKPNMT) shows a compositional bias: polar residues. Residues 82-93 (NSNEKSNKPNKP) are compositionally biased toward low complexity. Polar residues predominate over residues 115-129 (KPANTSNQTQSSGNK). Residues 133-170 (GGQKRNNNNNSNRPGGGNPNRPGGNNRPNRGGNFNNKG) are compositionally biased toward low complexity. The region spanning 283–452 (ERPPVVTIMG…LLVSEVEELK (170 aa)) is the tr-type G domain. The segment at 292–299 (GHVDHGKT) is G1. 292 to 299 (GHVDHGKT) provides a ligand contact to GTP. The G2 stretch occupies residues 317–321 (GITQH). Residues 338–341 (DTPG) are G3. GTP contacts are provided by residues 338–342 (DTPGH) and 392–395 (NKID). The G4 stretch occupies residues 392–395 (NKID). Residues 428 to 430 (SAK) form a G5 region.

The protein belongs to the TRAFAC class translation factor GTPase superfamily. Classic translation factor GTPase family. IF-2 subfamily.

It is found in the cytoplasm. Functionally, one of the essential components for the initiation of protein synthesis. Protects formylmethionyl-tRNA from spontaneous hydrolysis and promotes its binding to the 30S ribosomal subunits. Also involved in the hydrolysis of GTP during the formation of the 70S ribosomal complex. In Listeria innocua serovar 6a (strain ATCC BAA-680 / CLIP 11262), this protein is Translation initiation factor IF-2.